The following is a 381-amino-acid chain: Succinyl-diaminopimelate desuccinylase (381 aa).

Position 68 (His-68) interacts with Zn(2+). Asp-70 is an active-site residue. Asp-101 is a Zn(2+) binding site. The active-site Proton acceptor is Glu-135. 3 residues coordinate Zn(2+): Glu-136, Glu-164, and His-350.

Belongs to the peptidase M20A family. DapE subfamily. As to quaternary structure, homodimer. It depends on Zn(2+) as a cofactor. Co(2+) serves as cofactor.

The enzyme catalyses N-succinyl-(2S,6S)-2,6-diaminopimelate + H2O = (2S,6S)-2,6-diaminopimelate + succinate. It functions in the pathway amino-acid biosynthesis; L-lysine biosynthesis via DAP pathway; LL-2,6-diaminopimelate from (S)-tetrahydrodipicolinate (succinylase route): step 3/3. Functionally, catalyzes the hydrolysis of N-succinyl-L,L-diaminopimelic acid (SDAP), forming succinate and LL-2,6-diaminopimelate (DAP), an intermediate involved in the bacterial biosynthesis of lysine and meso-diaminopimelic acid, an essential component of bacterial cell walls. The polypeptide is Succinyl-diaminopimelate desuccinylase (Neisseria gonorrhoeae (strain NCCP11945)).